We begin with the raw amino-acid sequence, 179 residues long: Large ribosomal subunit protein uL5 (179 aa).

The protein belongs to the universal ribosomal protein uL5 family. As to quaternary structure, part of the 50S ribosomal subunit; part of the 5S rRNA/L5/L18/L25 subcomplex. Contacts the 5S rRNA and the P site tRNA. Forms a bridge to the 30S subunit in the 70S ribosome.

In terms of biological role, this is one of the proteins that bind and probably mediate the attachment of the 5S RNA into the large ribosomal subunit, where it forms part of the central protuberance. In the 70S ribosome it contacts protein S13 of the 30S subunit (bridge B1b), connecting the 2 subunits; this bridge is implicated in subunit movement. Contacts the P site tRNA; the 5S rRNA and some of its associated proteins might help stabilize positioning of ribosome-bound tRNAs. This chain is Large ribosomal subunit protein uL5, found in Xylella fastidiosa (strain M23).